The chain runs to 1780 residues: Chitin synthase Vb (1780 aa).

6 N-linked (GlcNAc...) asparagine glycosylation sites follow: N133, N153, N629, N644, N655, and N660. 2 helical membrane passes run A740–I760 and F776–F796. The 62-residue stretch at N805–F866 folds into the Cytochrome b5 heme-binding domain. 2 N-linked (GlcNAc...) asparagine glycosylation sites follow: N888 and N1009. The chain crosses the membrane as a helical span at residues L1046–L1066. Residue N1411 is glycosylated (N-linked (GlcNAc...) asparagine). 3 consecutive transmembrane segments (helical) span residues L1442 to L1462, I1469 to I1489, and I1497 to Y1517. N-linked (GlcNAc...) asparagine glycosylation occurs at N1524. The tract at residues T1649 to G1691 is disordered. Residues P1668–P1681 show a composition bias toward polar residues. The DEK-C domain occupies G1722–E1778.

The protein belongs to the chitin synthase family. Class VII subfamily.

Its subcellular location is the cell membrane. It carries out the reaction [(1-&gt;4)-N-acetyl-beta-D-glucosaminyl](n) + UDP-N-acetyl-alpha-D-glucosamine = [(1-&gt;4)-N-acetyl-beta-D-glucosaminyl](n+1) + UDP + H(+). Polymerizes chitin, a structural polymer of the cell wall and septum, by transferring the sugar moiety of UDP-GlcNAc to the non-reducing end of the growing chitin polymer. ChsV and chsVb do perform additive, but not redundant, functions in septum formation. Functions not only in the maintenance of cell wall integrity under different osmotic conditions but also in polarized cell wall synthesis. Plays an important role in the complex infection process of this fungus. The sequence is that of Chitin synthase Vb from Fusarium oxysporum f. sp. lycopersici (strain 4287 / CBS 123668 / FGSC 9935 / NRRL 34936) (Fusarium vascular wilt of tomato).